Reading from the N-terminus, the 210-residue chain is Thiamine-phosphate synthase (210 aa).

4-amino-2-methyl-5-(diphosphooxymethyl)pyrimidine-binding positions include 38 to 42 and asparagine 70; that span reads QFREK. Mg(2+)-binding residues include aspartate 71 and aspartate 90. Serine 107 contributes to the 4-amino-2-methyl-5-(diphosphooxymethyl)pyrimidine binding site. 132 to 134 is a binding site for 2-[(2R,5Z)-2-carboxy-4-methylthiazol-5(2H)-ylidene]ethyl phosphate; the sequence is TKT. Residue lysine 135 coordinates 4-amino-2-methyl-5-(diphosphooxymethyl)pyrimidine. A 2-[(2R,5Z)-2-carboxy-4-methylthiazol-5(2H)-ylidene]ethyl phosphate-binding site is contributed by 183 to 184; that stretch reads IS.

It belongs to the thiamine-phosphate synthase family. The cofactor is Mg(2+).

The enzyme catalyses 2-[(2R,5Z)-2-carboxy-4-methylthiazol-5(2H)-ylidene]ethyl phosphate + 4-amino-2-methyl-5-(diphosphooxymethyl)pyrimidine + 2 H(+) = thiamine phosphate + CO2 + diphosphate. It catalyses the reaction 2-(2-carboxy-4-methylthiazol-5-yl)ethyl phosphate + 4-amino-2-methyl-5-(diphosphooxymethyl)pyrimidine + 2 H(+) = thiamine phosphate + CO2 + diphosphate. The catalysed reaction is 4-methyl-5-(2-phosphooxyethyl)-thiazole + 4-amino-2-methyl-5-(diphosphooxymethyl)pyrimidine + H(+) = thiamine phosphate + diphosphate. The protein operates within cofactor biosynthesis; thiamine diphosphate biosynthesis; thiamine phosphate from 4-amino-2-methyl-5-diphosphomethylpyrimidine and 4-methyl-5-(2-phosphoethyl)-thiazole: step 1/1. In terms of biological role, condenses 4-methyl-5-(beta-hydroxyethyl)thiazole monophosphate (THZ-P) and 2-methyl-4-amino-5-hydroxymethyl pyrimidine pyrophosphate (HMP-PP) to form thiamine monophosphate (TMP). The protein is Thiamine-phosphate synthase of Archaeoglobus fulgidus (strain ATCC 49558 / DSM 4304 / JCM 9628 / NBRC 100126 / VC-16).